The chain runs to 387 residues: Diphthine methyltransferase (387 aa).

WD repeat units lie at residues 62-102, 119-159, 195-237, 241-286, and 357-387; these read NTYG…KDDF, EKDV…VQFT, PHEL…FIWS, IHDA…ESIF, and GHDS…TWIV.

This sequence belongs to the DPH7 family. In terms of assembly, interacts with CAN1 and RTT10.

Its subcellular location is the cytoplasm. It localises to the endosome. It catalyses the reaction diphthine methyl ester-[translation elongation factor 2] + H2O = diphthine-[translation elongation factor 2] + methanol + H(+). Its pathway is protein modification; peptidyl-diphthamide biosynthesis. Catalyzes the demethylation of diphthine methyl ester to form diphthine, an intermediate in diphthamide biosynthesis, a post-translational modification of histidine which occurs in translation elongation factor 2 (EFT1 and EFT2). Also plays a role in the regulation of the retromer complex and is required for the recycling from endosomes of plasma membrane proteins like CAN1 and MUP1. Identified in a screen for mutants with decreased levels of rDNA transcription. The chain is Diphthine methyltransferase (RRT2) from Saccharomyces cerevisiae (strain ATCC 204508 / S288c) (Baker's yeast).